The following is a 672-amino-acid chain: Spermatid perinuclear RNA-binding protein (672 aa).

The DZF domain occupies 5 to 363 (RSFANDDRHV…ALKRPFEDGL (359 aa)). Disordered stretches follow at residues 52–73 (TNKGTKTEGETEVKKDEAGENY) and 349–371 (GAGSSALKRPFEDGLGDDKDPNK). Over residues 357–371 (RPFEDGLGDDKDPNK) the composition is skewed to basic and acidic residues. Residues 387 to 453 (DLMNALMRLN…AVKVLQAMGY (67 aa)) enclose the DRBM 1 domain. Positions 466–476 (SDEKSDNESKN) are enriched in basic and acidic residues. The tract at residues 466 to 499 (SDEKSDNESKNETVSSNSSNNTGNSTTETSSTLE) is disordered. Residues 477-497 (ETVSSNSSNNTGNSTTETSST) are compositionally biased toward low complexity. The DRBM 2 domain maps to 510–576 (SGKNPVMELN…ALAALEKLFS (67 aa)). Asymmetric dimethylarginine occurs at positions 612 and 617.

As to quaternary structure, interacts with EIF2AK2. Associates with microtubules; it is unsure whether such interaction is direct or indirect.

The protein resides in the cytoplasm. Its function is as follows. Involved in spermatogenesis and sperm function. Plays a role in regulation of cell growth. Binds to double-stranded DNA and RNA. Binds most efficiently to poly(I:C) RNA than to poly(dI:dC) DNA. Binds also to single-stranded poly(G) RNA. Binds non-specifically to the mRNA PRM1 3'-UTR and adenovirus VA RNA. This is Spermatid perinuclear RNA-binding protein (STRBP) from Pongo abelii (Sumatran orangutan).